Consider the following 495-residue polypeptide: Trimethylamine methyltransferase MttB1 (495 aa).

O334 is a non-standard amino acid (pyrrolysine).

The protein belongs to the trimethylamine methyltransferase family. As to quaternary structure, can form a complex with MttC.

The catalysed reaction is Co(I)-[trimethylamine-specific corrinoid protein] + trimethylamine + H(+) = methyl-Co(III)-[trimethylamine-specific corrinoid protein] + dimethylamine. It participates in one-carbon metabolism; methanogenesis from trimethylamine. Its function is as follows. Catalyzes the transfer of a methyl group from trimethylamine to the corrinoid cofactor of MttC. The sequence is that of Trimethylamine methyltransferase MttB1 (mttB1) from Methanosarcina acetivorans (strain ATCC 35395 / DSM 2834 / JCM 12185 / C2A).